A 256-amino-acid polypeptide reads, in one-letter code: Pimeloyl-[acyl-carrier protein] methyl ester esterase (256 aa).

The 228-residue stretch at 15 to 242 (HLVLLHGWGL…AAHAPFISHP (228 aa)) folds into the AB hydrolase-1 domain. Residues Trp-22, 82-83 (SL), and 143-147 (FLALQ) each bind substrate. Ser-82 serves as the catalytic Nucleophile. Residues Asp-207 and His-235 contribute to the active site. A substrate-binding site is contributed by His-235.

The protein belongs to the AB hydrolase superfamily. Carboxylesterase BioH family. In terms of assembly, monomer.

It is found in the cytoplasm. It carries out the reaction 6-carboxyhexanoyl-[ACP] methyl ester + H2O = 6-carboxyhexanoyl-[ACP] + methanol + H(+). Its pathway is cofactor biosynthesis; biotin biosynthesis. In terms of biological role, the physiological role of BioH is to remove the methyl group introduced by BioC when the pimeloyl moiety is complete. It allows to synthesize pimeloyl-ACP via the fatty acid synthetic pathway through the hydrolysis of the ester bonds of pimeloyl-ACP esters. This Escherichia coli O81 (strain ED1a) protein is Pimeloyl-[acyl-carrier protein] methyl ester esterase.